A 523-amino-acid chain; its full sequence is UDP-glucuronosyltransferase 3A1 (523 aa).

Residues 1-23 (MAVGRKSLILSLLIQHFVLLHGA) form the signal peptide. The Extracellular portion of the chain corresponds to 24–483 (KILTVCFLGG…YSYQQPLYQQ (460 aa)). A glycan (N-linked (GlcNAc...) asparagine) is linked at Asn-125. Residues 484 to 504 (YLLDVFLFVCVCVIGACYLTV) form a helical membrane-spanning segment. Residues 505-523 (KLLKMFIQKLCSFRKLKQN) lie on the Cytoplasmic side of the membrane.

This sequence belongs to the UDP-glycosyltransferase family.

The protein localises to the membrane. The enzyme catalyses glucuronate acceptor + UDP-alpha-D-glucuronate = acceptor beta-D-glucuronoside + UDP + H(+). UDP-glucuronosyltransferases catalyze phase II biotransformation reactions in which lipophilic substrates are conjugated with glucuronic acid to increase water solubility and enhance excretion. They are of major importance in the conjugation and subsequent elimination of potentially toxic xenobiotics and endogenous compounds. This chain is UDP-glucuronosyltransferase 3A1 (ugt3a1), found in Xenopus laevis (African clawed frog).